The sequence spans 240 residues: Ornithine decarboxylase antizyme (240 aa).

2 disordered regions span residues 18 to 45 and 69 to 95; these read RSEP…SSAG and DHDR…SSEF. Positions 21 to 33 are enriched in polar residues; sequence PISSSNRATKRTI. Positions 34–43 are enriched in low complexity; the sequence is SSSSSSSSSS. The segment covering 69-84 has biased composition (basic and acidic residues); the sequence is DHDRASPLKEYNRKTS. The span at 85 to 95 shows a compositional bias: polar residues; the sequence is IDSTTTASSEF.

It belongs to the ODC antizyme family. In terms of assembly, interacts with ODC1 and thereby sterically blocks ODC homodimerization. Preferentially expressed in adult female midguts.

In terms of biological role, ornithine decarboxylase (ODC) antizyme protein that negatively regulates ODC activity and intracellular polyamine biosynthesis and uptake in response to increased intracellular polyamine levels. Binds to ODC monomers, inhibiting the assembly of the functional ODC homodimer, and targets the monomers for ubiquitin-independent proteolytic destruction by the 26S proteasome. The chain is Ornithine decarboxylase antizyme (Oda) from Aedes aegypti (Yellowfever mosquito).